We begin with the raw amino-acid sequence, 347 residues long: NADH-quinone oxidoreductase subunit H (347 aa).

The next 8 helical transmembrane spans lie at 13–33 (LIMIGQSLLLLVCLLVFIAYI), 82–102 (AVFLLAPLVSVVLALSTWAVV), 115–135 (VGILYILAISSLEVYGIIMGG), 161–181 (IGLVIVTVLLCVGSLNLTDIV), 198–218 (FLDWHWLSLFPMFIVFFISAL), 258–278 (AVVLMCSLTTILFLGGWLPPV), 286–306 (VPGIIWFMLKACFVFFMFAMV), and 321–341 (LGWKVFLPLSLAMVVIVAFVL).

The protein belongs to the complex I subunit 1 family. As to quaternary structure, NDH-1 is composed of 14 different subunits. Subunits NuoA, H, J, K, L, M, N constitute the membrane sector of the complex.

The protein localises to the cell inner membrane. The catalysed reaction is a quinone + NADH + 5 H(+)(in) = a quinol + NAD(+) + 4 H(+)(out). Functionally, NDH-1 shuttles electrons from NADH, via FMN and iron-sulfur (Fe-S) centers, to quinones in the respiratory chain. The immediate electron acceptor for the enzyme in this species is believed to be ubiquinone. Couples the redox reaction to proton translocation (for every two electrons transferred, four hydrogen ions are translocated across the cytoplasmic membrane), and thus conserves the redox energy in a proton gradient. This subunit may bind ubiquinone. This Rhizobium rhizogenes (strain K84 / ATCC BAA-868) (Agrobacterium radiobacter) protein is NADH-quinone oxidoreductase subunit H.